The following is a 196-amino-acid chain: ATP-dependent Clp protease proteolytic subunit (196 aa).

Ser-99 serves as the catalytic Nucleophile. His-124 is a catalytic residue.

This sequence belongs to the peptidase S14 family. Fourteen ClpP subunits assemble into 2 heptameric rings which stack back to back to give a disk-like structure with a central cavity, resembling the structure of eukaryotic proteasomes.

The protein resides in the cytoplasm. The catalysed reaction is Hydrolysis of proteins to small peptides in the presence of ATP and magnesium. alpha-casein is the usual test substrate. In the absence of ATP, only oligopeptides shorter than five residues are hydrolyzed (such as succinyl-Leu-Tyr-|-NHMec, and Leu-Tyr-Leu-|-Tyr-Trp, in which cleavage of the -Tyr-|-Leu- and -Tyr-|-Trp bonds also occurs).. Its function is as follows. Cleaves peptides in various proteins in a process that requires ATP hydrolysis. Has a chymotrypsin-like activity. Plays a major role in the degradation of misfolded proteins. The protein is ATP-dependent Clp protease proteolytic subunit of Nitratiruptor sp. (strain SB155-2).